A 376-amino-acid polypeptide reads, in one-letter code: F-box/kelch-repeat protein At1g67480 (376 aa).

Residues 37–85 (DPLIPGLPDDVAKQCLALVPRARFPSMGSVCKKWRFVVQSKEFITVRRL) form the F-box domain. 4 Kelch repeats span residues 139-189 (KLLV…EVNG), 190-237 (HVYV…AFNG), 239-289 (LYVM…LFCI), and 291-335 (WKNH…LLFS).

The sequence is that of F-box/kelch-repeat protein At1g67480 from Arabidopsis thaliana (Mouse-ear cress).